Consider the following 108-residue polypeptide: Large ribosomal subunit protein bL31B (108 aa).

The tract at residues 86–108 (KPETVVEDVLPKGKKKSPAKKKK) is disordered. Basic residues predominate over residues 97–108 (KGKKKSPAKKKK).

Belongs to the bacterial ribosomal protein bL31 family. Type B subfamily. As to quaternary structure, part of the 50S ribosomal subunit.

This is Large ribosomal subunit protein bL31B from Chlamydia trachomatis serovar L2 (strain ATCC VR-902B / DSM 19102 / 434/Bu).